The following is a 192-amino-acid chain: dITP/XTP pyrophosphatase (192 aa).

A substrate-binding site is contributed by 12 to 17 (TNNENK). 2 residues coordinate Mg(2+): glutamate 41 and aspartate 70. Aspartate 70 serves as the catalytic Proton acceptor. Substrate-binding positions include serine 71, 145–148 (FGFD), lysine 168, and 173–174 (HR).

This sequence belongs to the HAM1 NTPase family. In terms of assembly, homodimer. Mg(2+) is required as a cofactor.

The catalysed reaction is XTP + H2O = XMP + diphosphate + H(+). The enzyme catalyses dITP + H2O = dIMP + diphosphate + H(+). It carries out the reaction ITP + H2O = IMP + diphosphate + H(+). Pyrophosphatase that catalyzes the hydrolysis of nucleoside triphosphates to their monophosphate derivatives, with a high preference for the non-canonical purine nucleotides XTP (xanthosine triphosphate), dITP (deoxyinosine triphosphate) and ITP. Seems to function as a house-cleaning enzyme that removes non-canonical purine nucleotides from the nucleotide pool, thus preventing their incorporation into DNA/RNA and avoiding chromosomal lesions. This chain is dITP/XTP pyrophosphatase, found in Saccharolobus solfataricus (strain ATCC 35092 / DSM 1617 / JCM 11322 / P2) (Sulfolobus solfataricus).